Here is a 551-residue protein sequence, read N- to C-terminus: Membrane protein insertase YidC (551 aa).

The chain crosses the membrane as a helical span at residues 3-23 (ANHIRILLLVTIAIMFISLMG). A compositionally biased stretch (polar residues) spans 33–47 (NTKQQTSATQNNSHY). Residues 33 to 59 (NTKQQTSATQNNSHYDNADSSTNTDVT) form a disordered region. Residues 50–59 (ADSSTNTDVT) show a composition bias toward low complexity. The next 3 membrane-spanning stretches (helical) occupy residues 361 to 381 (LVGN…LIFY), 431 to 451 (LSGC…YWVL), and 504 to 524 (VMMF…SGLV).

This sequence belongs to the OXA1/ALB3/YidC family. Type 1 subfamily. As to quaternary structure, interacts with the Sec translocase complex via SecD. Specifically interacts with transmembrane segments of nascent integral membrane proteins during membrane integration.

The protein resides in the cell inner membrane. Functionally, required for the insertion and/or proper folding and/or complex formation of integral membrane proteins into the membrane. Involved in integration of membrane proteins that insert both dependently and independently of the Sec translocase complex, as well as at least some lipoproteins. Aids folding of multispanning membrane proteins. The protein is Membrane protein insertase YidC of Francisella tularensis subsp. mediasiatica (strain FSC147).